The primary structure comprises 156 residues: uncharacterized protein (156 aa).

This is an uncharacterized protein from Saccharomyces cerevisiae (strain ATCC 204508 / S288c) (Baker's yeast).